A 177-amino-acid polypeptide reads, in one-letter code: Dual-action ribosomal maturation protein DarP (177 aa).

Belongs to the DarP family.

The protein localises to the cytoplasm. In terms of biological role, member of a network of 50S ribosomal subunit biogenesis factors which assembles along the 30S-50S interface, preventing incorrect 23S rRNA structures from forming. Promotes peptidyl transferase center (PTC) maturation. The protein is Dual-action ribosomal maturation protein DarP of Histophilus somni (strain 2336) (Haemophilus somnus).